Here is a 472-residue protein sequence, read N- to C-terminus: Bifunctional protein HldE (472 aa).

The ribokinase stretch occupies residues 1-315; the sequence is MAKRVKILVV…QLLNSSFGAN (315 aa). 192–195 contacts ATP; it reads NKKE. Residue D260 is part of the active site. The interval 340–472 is cytidylyltransferase; sequence FTNGCFDILH…IKDAKNDDKK (133 aa).

This sequence in the N-terminal section; belongs to the carbohydrate kinase PfkB family. The protein in the C-terminal section; belongs to the cytidylyltransferase family. As to quaternary structure, homodimer.

It carries out the reaction D-glycero-beta-D-manno-heptose 7-phosphate + ATP = D-glycero-beta-D-manno-heptose 1,7-bisphosphate + ADP + H(+). It catalyses the reaction D-glycero-beta-D-manno-heptose 1-phosphate + ATP + H(+) = ADP-D-glycero-beta-D-manno-heptose + diphosphate. The protein operates within nucleotide-sugar biosynthesis; ADP-L-glycero-beta-D-manno-heptose biosynthesis; ADP-L-glycero-beta-D-manno-heptose from D-glycero-beta-D-manno-heptose 7-phosphate: step 1/4. It participates in nucleotide-sugar biosynthesis; ADP-L-glycero-beta-D-manno-heptose biosynthesis; ADP-L-glycero-beta-D-manno-heptose from D-glycero-beta-D-manno-heptose 7-phosphate: step 3/4. Catalyzes the phosphorylation of D-glycero-D-manno-heptose 7-phosphate at the C-1 position to selectively form D-glycero-beta-D-manno-heptose-1,7-bisphosphate. In terms of biological role, catalyzes the ADP transfer from ATP to D-glycero-beta-D-manno-heptose 1-phosphate, yielding ADP-D-glycero-beta-D-manno-heptose. The sequence is that of Bifunctional protein HldE from Campylobacter concisus (strain 13826).